A 376-amino-acid polypeptide reads, in one-letter code: Queuine tRNA-ribosyltransferase (376 aa).

Asp90 acts as the Proton acceptor in catalysis. Substrate is bound by residues Asp90–Phe94, Asp144, Gln193, and Gly220. Residues Gly251–Asp257 form an RNA binding region. Asp270 serves as the catalytic Nucleophile. Residues Thr275 to Arg279 are RNA binding; important for wobble base 34 recognition. Cys308, Cys310, Cys313, and His339 together coordinate Zn(2+).

The protein belongs to the queuine tRNA-ribosyltransferase family. As to quaternary structure, homodimer. Within each dimer, one monomer is responsible for RNA recognition and catalysis, while the other monomer binds to the replacement base PreQ1. Zn(2+) is required as a cofactor.

The catalysed reaction is 7-aminomethyl-7-carbaguanine + guanosine(34) in tRNA = 7-aminomethyl-7-carbaguanosine(34) in tRNA + guanine. It participates in tRNA modification; tRNA-queuosine biosynthesis. Its function is as follows. Catalyzes the base-exchange of a guanine (G) residue with the queuine precursor 7-aminomethyl-7-deazaguanine (PreQ1) at position 34 (anticodon wobble position) in tRNAs with GU(N) anticodons (tRNA-Asp, -Asn, -His and -Tyr). Catalysis occurs through a double-displacement mechanism. The nucleophile active site attacks the C1' of nucleotide 34 to detach the guanine base from the RNA, forming a covalent enzyme-RNA intermediate. The proton acceptor active site deprotonates the incoming PreQ1, allowing a nucleophilic attack on the C1' of the ribose to form the product. After dissociation, two additional enzymatic reactions on the tRNA convert PreQ1 to queuine (Q), resulting in the hypermodified nucleoside queuosine (7-(((4,5-cis-dihydroxy-2-cyclopenten-1-yl)amino)methyl)-7-deazaguanosine). This Campylobacter concisus (strain 13826) protein is Queuine tRNA-ribosyltransferase.